A 482-amino-acid chain; its full sequence is Ubiquitin carboxyl-terminal hydrolase 6 (482 aa).

One can recognise a Ubiquitin-like domain in the interval proline 2–isoleucine 77. The USP domain occupies alanine 104–arginine 478. The Nucleophile role is filled by cysteine 113. A calmodulin-binding region spans residues serine 172 to glycine 191. Basic and acidic residues-rich tracts occupy residues proline 350–lysine 361 and glycine 371–aspartate 381. The interval proline 350 to threonine 407 is disordered. Low complexity predominate over residues alanine 382–serine 393. Histidine 430 acts as the Proton acceptor in catalysis.

The protein belongs to the peptidase C19 family. In terms of assembly, interacts with calmodulin (CaM).

It carries out the reaction Thiol-dependent hydrolysis of ester, thioester, amide, peptide and isopeptide bonds formed by the C-terminal Gly of ubiquitin (a 76-residue protein attached to proteins as an intracellular targeting signal).. Functionally, recognizes and hydrolyzes the peptide bond at the C-terminal Gly of ubiquitin. Involved in the processing of poly-ubiquitin precursors as well as that of ubiquitinated proteins. The polypeptide is Ubiquitin carboxyl-terminal hydrolase 6 (UBP6) (Arabidopsis thaliana (Mouse-ear cress)).